Consider the following 471-residue polypeptide: ATP synthase subunit beta (471 aa).

156-163 (GGAGVGKT) lines the ATP pocket.

It belongs to the ATPase alpha/beta chains family. In terms of assembly, F-type ATPases have 2 components, CF(1) - the catalytic core - and CF(0) - the membrane proton channel. CF(1) has five subunits: alpha(3), beta(3), gamma(1), delta(1), epsilon(1). CF(0) has three main subunits: a(1), b(2) and c(9-12). The alpha and beta chains form an alternating ring which encloses part of the gamma chain. CF(1) is attached to CF(0) by a central stalk formed by the gamma and epsilon chains, while a peripheral stalk is formed by the delta and b chains.

The protein resides in the cell membrane. It carries out the reaction ATP + H2O + 4 H(+)(in) = ADP + phosphate + 5 H(+)(out). Functionally, produces ATP from ADP in the presence of a proton gradient across the membrane. The catalytic sites are hosted primarily by the beta subunits. This is ATP synthase subunit beta from Macrococcus caseolyticus (strain JCSC5402) (Macrococcoides caseolyticum).